We begin with the raw amino-acid sequence, 75 residues long: ATP synthase subunit c (75 aa).

The next 2 membrane-spanning stretches (helical) occupy residues Gly-4 to Gln-24 and Ala-54 to Phe-74.

Belongs to the ATPase C chain family. F-type ATPases have 2 components, F(1) - the catalytic core - and F(0) - the membrane proton channel. F(1) has five subunits: alpha(3), beta(3), gamma(1), delta(1), epsilon(1). F(0) has three main subunits: a(1), b(2) and c(10-14). The alpha and beta chains form an alternating ring which encloses part of the gamma chain. F(1) is attached to F(0) by a central stalk formed by the gamma and epsilon chains, while a peripheral stalk is formed by the delta and b chains.

Its subcellular location is the cell membrane. Functionally, f(1)F(0) ATP synthase produces ATP from ADP in the presence of a proton or sodium gradient. F-type ATPases consist of two structural domains, F(1) containing the extramembraneous catalytic core and F(0) containing the membrane proton channel, linked together by a central stalk and a peripheral stalk. During catalysis, ATP synthesis in the catalytic domain of F(1) is coupled via a rotary mechanism of the central stalk subunits to proton translocation. In terms of biological role, key component of the F(0) channel; it plays a direct role in translocation across the membrane. A homomeric c-ring of between 10-14 subunits forms the central stalk rotor element with the F(1) delta and epsilon subunits. The sequence is that of ATP synthase subunit c from Mycoplasmopsis agalactiae (strain NCTC 10123 / CIP 59.7 / PG2) (Mycoplasma agalactiae).